A 464-amino-acid chain; its full sequence is Protein FAM90A3 (464 aa).

Disordered regions lie at residues 1–42 (MMAR…DPRL), 70–389 (PATL…HDGA), and 411–437 (APSFHSPEKPGAFLAQSPHVSEKSEAP). Composition is skewed to basic and acidic residues over residues 74 to 89 (GKKEGKENLKPWKPRV) and 97 to 114 (NKDKGEKEERPRQQDPQR). A compositionally biased stretch (low complexity) spans 180 to 197 (LASLSPLRKASLSSSSSL).

The protein belongs to the FAM90 family.

The protein is Protein FAM90A3 of Homo sapiens (Human).